The sequence spans 147 residues: Hemoglobin subunit epsilon (147 aa).

In terms of domain architecture, Globin spans 3 to 147 (HFTAEEKSVI…VATALAHKYH (145 aa)). Ser51 carries the phosphoserine modification. His64 and His93 together coordinate heme b.

Belongs to the globin family. In terms of tissue distribution, red blood cells.

In terms of biological role, hemoglobin epsilon chain is a beta-type chain found in early embryos. This chain is Hemoglobin subunit epsilon (HBE1), found in Sus scrofa (Pig).